We begin with the raw amino-acid sequence, 203 residues long: Urease accessory protein UreG (203 aa).

14–21 (GPVGSGKT) is a binding site for GTP.

It belongs to the SIMIBI class G3E GTPase family. UreG subfamily. Homodimer. UreD, UreF and UreG form a complex that acts as a GTP-hydrolysis-dependent molecular chaperone, activating the urease apoprotein by helping to assemble the nickel containing metallocenter of UreC. The UreE protein probably delivers the nickel.

Its subcellular location is the cytoplasm. In terms of biological role, facilitates the functional incorporation of the urease nickel metallocenter. This process requires GTP hydrolysis, probably effectuated by UreG. In Rhizobium leguminosarum bv. trifolii (strain WSM2304), this protein is Urease accessory protein UreG.